A 217-amino-acid polypeptide reads, in one-letter code: Ribosomal RNA small subunit methyltransferase G (217 aa).

S-adenosyl-L-methionine-binding positions include Gly-79, Phe-84, 130 to 131 (AE), and Arg-148.

It belongs to the methyltransferase superfamily. RNA methyltransferase RsmG family.

The protein localises to the cytoplasm. The enzyme catalyses guanosine(527) in 16S rRNA + S-adenosyl-L-methionine = N(7)-methylguanosine(527) in 16S rRNA + S-adenosyl-L-homocysteine. Its function is as follows. Specifically methylates the N7 position of guanine in position 527 of 16S rRNA. The chain is Ribosomal RNA small subunit methyltransferase G from Myxococcus xanthus (strain DK1622).